Reading from the N-terminus, the 486-residue chain is MTHYIQGQWHAGKGHDVASMNPANTHTIWTGKTATAEQVNAAVDAARAAQFDWFMLGFDARLAIVETYRSQLEANKAELAETIAQETGKPQWETATEVGAMIGKIALSAAAYNKRTGTEANDTPAGRAVIRHKPHGVVAVFGPYNFPGHLPNGHIVPALLAGNTVIFKPSELTPKVAELMVSLWDKAGLPAGVLNLVQGEVDTGKALASHPQLDGLFFTGSSRTGHFLHQQYAGHPGKILALEMGGNNPLIIKGVQDIKAAVHDILQSAYISSGQRCTCARRLYVEQGEQGDALIAMLADAVKQIKVGPWNSQPQPFMGSMISETAAKGMVAAQANLLNLGGVSLVELTHLEAGTGLVSPGLIDVTAIDALPDEEYFGPLLQLVRYSDFDQAIKLANQTRYGLSAGLLADSREDYDYFLARIRAGIVNWNKQITGASGAAPFGGVGASGNHRASAFYAADYCAYPVASVEADTVSLPATLSPGLSL.

220 to 225 (GSSRTG) is a binding site for NAD(+). Residues E243 and C277 contribute to the active site.

It belongs to the aldehyde dehydrogenase family. AstD subfamily.

The catalysed reaction is N-succinyl-L-glutamate 5-semialdehyde + NAD(+) + H2O = N-succinyl-L-glutamate + NADH + 2 H(+). It functions in the pathway amino-acid degradation; L-arginine degradation via AST pathway; L-glutamate and succinate from L-arginine: step 4/5. Its function is as follows. Catalyzes the NAD-dependent reduction of succinylglutamate semialdehyde into succinylglutamate. The sequence is that of N-succinylglutamate 5-semialdehyde dehydrogenase from Shewanella baltica (strain OS223).